The sequence spans 655 residues: MLKHDLDYLELLSESFPTATEVATEIINLEAILNLPKGTEHFLADIHGEYEAFIHVLKNASGSIRRKVDEVFGGQLRQNQKRELCTLIYYPREKLELVKQSDERMEDWYMVTLNQLIKVCQKAAEKYTRSKVRKTLPPKYSYIIQELLHEDGVNPNKSAYISSIFSSIISTGCADDFIIAISETIQRLVIDHLHVVGDVFDRGPGAHIIMDTLMKYHHFDIQWGNHDMLWMGAAVGNASCMANVVRIALRYANLDTLESGYGINLLPLARFAMDTYADDPCTVFKPKLAQADQTYDDKSVYLISQMHKAISIIQFKLEHQIIARHPEYKMDNRDLFHLVNFTDGTIKLSSGVYPMLDMNFPTVDPADPYALTEQEQNIVDRLMGCFMRSEKLQNHLKCLYRHGSMYLTYNMNLLYHASIPLNKDKSLKKVRVGDKTYAGRELLDKVEEMIRTAYVAPEKSDQRLAAVDYMWYLWCGPDSPLFDKAMMTTFERYFIEDKATHHEEKGYYYVYRQEKAVCEMILKEFGLEGPDTHIINGHVPVKAKKGELPIGAEGKLMLIDGGFSKAYQSSTGIAGYTLIFNSQGLHLVQHEPFSSTRKAIEEMEDIKSITVVREVTSHRMLVKDTDNGHLLSKQVENLKKLLQAYSYGLIKERKK.

The protein belongs to the FBPase class 3 family. Mn(2+) is required as a cofactor.

The catalysed reaction is beta-D-fructose 1,6-bisphosphate + H2O = beta-D-fructose 6-phosphate + phosphate. The protein operates within carbohydrate biosynthesis; gluconeogenesis. The polypeptide is Fructose-1,6-bisphosphatase class 3 (Porphyromonas gingivalis (strain ATCC 33277 / DSM 20709 / CIP 103683 / JCM 12257 / NCTC 11834 / 2561)).